A 306-amino-acid chain; its full sequence is Pantothenate kinase (306 aa).

Residue 91–98 participates in ATP binding; the sequence is GSVAVGKS.

It belongs to the prokaryotic pantothenate kinase family.

The protein resides in the cytoplasm. It carries out the reaction (R)-pantothenate + ATP = (R)-4'-phosphopantothenate + ADP + H(+). Its pathway is cofactor biosynthesis; coenzyme A biosynthesis; CoA from (R)-pantothenate: step 1/5. This Streptococcus gordonii (strain Challis / ATCC 35105 / BCRC 15272 / CH1 / DL1 / V288) protein is Pantothenate kinase.